A 549-amino-acid chain; its full sequence is Probable serine/threonine-protein kinase WNK5 (549 aa).

The Protein kinase domain maps to 25 to 283 (GRFREVLGKG…AKELLADPFL (259 aa)). ATP is bound by residues 105 to 108 (TELF) and lysine 155. Aspartate 172 serves as the catalytic Proton acceptor. The disordered stretch occupies residues 414 to 490 (ESFGHEDDED…SPAIDDDQNQ (77 aa)). Over residues 452-463 (DDSSNDVIPDMD) the composition is skewed to acidic residues. The span at 467-476 (RSSNRLLNSS) shows a compositional bias: low complexity. Serine 504 bears the Phosphoserine mark. The segment at 525–549 (RGRGFDPNTNELQPQPSSTDFIRRC) is disordered. Over residues 531–549 (PNTNELQPQPSSTDFIRRC) the composition is skewed to polar residues.

It belongs to the protein kinase superfamily. Ser/Thr protein kinase family. WNK subfamily. Interacts with AHK4.

It carries out the reaction L-seryl-[protein] + ATP = O-phospho-L-seryl-[protein] + ADP + H(+). The enzyme catalyses L-threonyl-[protein] + ATP = O-phospho-L-threonyl-[protein] + ADP + H(+). In terms of biological role, regulates flowering time by modulating the photoperiod pathway. The sequence is that of Probable serine/threonine-protein kinase WNK5 (WNK5) from Arabidopsis thaliana (Mouse-ear cress).